We begin with the raw amino-acid sequence, 677 residues long: Mitochondrial disaggregase (677 aa).

Residues 1-28 (MLGSLVSKRTAPAPRLLLQLLRSPSLRS) constitute a mitochondrion transit peptide. The autoinhibitory stretch occupies residues 92–126 (PSPEDTLPGQDSWNGVLSRAGLGVWALATALVVHC). ANK repeat units lie at residues 133–162 (SKDA…DVNA), 166–195 (LGWT…DPNL), 235–265 (KGCT…PLQR), and 268–297 (MGHT…EKQR). His316, Ile318, Ser353, Gly354, Ile355, Gly356, Lys357, Thr358, Glu425, and Asn466 together coordinate ATP. The interval 477 to 505 (LQLRQEALEMSRNRIAENLGDVQISDKIT) is regulatory; slows ATPase and disaggregase activities. Arg531 contributes to the ATP binding site. Lys559 bears the N6-acetyllysine mark. Arg590 contributes to the ATP binding site.

This sequence belongs to the ClpA/ClpB family. As to quaternary structure, homododecamer when substrate-bound; the homododecamer consists of 2 homohexamers stacked head-to-head via ANK repeat-mediated interactions. The active substrate-bound form is likely to exist in a dynamic equilibrium between homohexamers and homododecamers. Homotetradecamer in the unbound state which is remodeled upon substrate binding into the homododecamer. Interacts with PHB and PHB2. Interacts with MAVS; the interaction is enhanced by Sendai virus infection. In terms of processing, proteolytically cleaved by protease PARL. ATP-dependent protein disaggregase activity is stimulated by PARL-mediated cleavage of the N-terminal autoinhibitory peptide.

The protein localises to the mitochondrion intermembrane space. The enzyme catalyses ATP + H2O = ADP + phosphate + H(+). With respect to regulation, disaggregase activity is inhibited by ADP. In terms of biological role, functions as a regulatory ATPase and participates in secretion/protein trafficking process. Has ATP-dependent protein disaggregase activity and is required to maintain the solubility of key mitochondrial proteins. Involved in mitochondrial-mediated antiviral innate immunity, activates RIG-I-mediated signal transduction and production of IFNB1 and pro-inflammatory cytokine IL6. Plays a role in granulocyte differentiation. This chain is Mitochondrial disaggregase, found in Bos taurus (Bovine).